We begin with the raw amino-acid sequence, 123 residues long: MPTNNQLVRCGRKSKIRASKSPALNGNPFAKGVCVLVKTITPRKPNSALRKMARVRFRNGTCVNAYIPGEGHNLQEHSTVLVRGGRVPDLPGVRYHIVRGVYDTQGVKNRKQGRSRYGAKRPK.

D89 is subject to 3-methylthioaspartic acid.

Belongs to the universal ribosomal protein uS12 family. As to quaternary structure, part of the 30S ribosomal subunit. Contacts proteins S8 and S17. May interact with IF1 in the 30S initiation complex.

Functionally, with S4 and S5 plays an important role in translational accuracy. Its function is as follows. Interacts with and stabilizes bases of the 16S rRNA that are involved in tRNA selection in the A site and with the mRNA backbone. Located at the interface of the 30S and 50S subunits, it traverses the body of the 30S subunit contacting proteins on the other side and probably holding the rRNA structure together. The combined cluster of proteins S8, S12 and S17 appears to hold together the shoulder and platform of the 30S subunit. In Orientia tsutsugamushi (strain Ikeda) (Rickettsia tsutsugamushi), this protein is Small ribosomal subunit protein uS12.